The following is a 429-amino-acid chain: MFS-type efflux pump MSMEG_3705 (429 aa).

The next 12 membrane-spanning stretches (helical) occupy residues 21-41, 59-79, 86-106, 115-137, 150-170, 181-201, 228-248, 264-284, 299-319, 327-347, 361-381, and 397-417; these read AWAA…DRFL, AIGV…GIAV, GAFG…TMLG, LALT…HAYV, LAVI…GGGL, FVIM…VVGV, FLIV…LTTF, VGVE…LIVG, LWIV…AFVV, LFLA…IAAI, AMFL…VGML, and ALLL…WLAS.

It belongs to the major facilitator superfamily.

It is found in the cell inner membrane. Its function is as follows. Probably plays a role in bacterial growth and resistance to antibiotics. This chain is MFS-type efflux pump MSMEG_3705, found in Mycolicibacterium smegmatis (strain ATCC 700084 / mc(2)155) (Mycobacterium smegmatis).